The chain runs to 922 residues: Hexokinase-3 (922 aa).

Positions 1 to 23 (MATIGPSGLHPGERASVCPHEGV) are disordered. 2 Hexokinase domains span residues 25 to 469 (RPSG…MVTA) and 475 to 911 (AAHR…LVTA). A hexokinase small subdomain 1 region spans residues 82–218 (HGTEQGDFLV…TYRIDVVAMV (137 aa)). 93 to 100 (ELGATGAS) provides a ligand contact to ATP. Residue 93–102 (ELGATGASLR) coordinates D-glucose 6-phosphate. Residues Ser-166, 183–184 (TK), and 219–220 (ND) contribute to the D-glucose site. The hexokinase large subdomain 1 stretch occupies residues 219-458 (NDTVGTMMGC…CDVSFIPSVD (240 aa)). 2 residues coordinate D-glucose 6-phosphate: Asp-220 and Thr-243. D-glucose-binding positions include Asn-246, Glu-271, and 302 to 305 (QRFE). 424-426 (GGR) serves as a coordination point for D-glucose 6-phosphate. ATP-binding positions include 436–437 (RI) and 540–545 (DLGGTN). The segment at 529–660 (DGSERGDFLA…AVELNVVAIV (132 aa)) is hexokinase small subdomain 2. 540-544 (DLGGT) contacts D-glucose 6-phosphate. D-glucose contacts are provided by residues 608-609 (SF), 625-626 (TK), and 661-662 (ND). The interval 661-900 (NDTVGTMMSC…CTVTFLQSED (240 aa)) is hexokinase large subdomain 2. The D-glucose 6-phosphate site is built by Asp-662 and Thr-685. Thr-685 provides a ligand contact to ATP. D-glucose-binding positions include 687–688 (TN), Glu-713, and Glu-747. ATP is bound by residues 752-753 (GM), 789-793 (TKFLS), and 868-872 (TLYKL). D-glucose 6-phosphate is bound by residues 866-868 (DGT) and Ser-902.

The protein belongs to the hexokinase family.

The enzyme catalyses a D-hexose + ATP = a D-hexose 6-phosphate + ADP + H(+). The catalysed reaction is D-fructose + ATP = D-fructose 6-phosphate + ADP + H(+). It catalyses the reaction D-glucose + ATP = D-glucose 6-phosphate + ADP + H(+). Its pathway is carbohydrate metabolism; hexose metabolism. It functions in the pathway carbohydrate degradation; glycolysis; D-glyceraldehyde 3-phosphate and glycerone phosphate from D-glucose: step 1/4. Hexokinase is an allosteric enzyme inhibited by its product D-glucose 6-phosphate. In terms of biological role, catalyzes the phosphorylation of hexose, such as D-glucose and D-fructose, to hexose 6-phosphate (D-glucose 6-phosphate and D-fructose 6-phosphate, respectively). Mediates the initial step of glycolysis by catalyzing phosphorylation of D-glucose to D-glucose 6-phosphate. This is Hexokinase-3 from Mus musculus (Mouse).